The chain runs to 1385 residues: L-2-aminoadipate reductase large subunit (1385 aa).

The Carrier domain occupies 843-920; that stretch reads SSFSPLEQEI…ELAKEISRVR (78 aa). An O-(pantetheine 4'-phosphoryl)serine modification is found at serine 880.

It belongs to the ATP-dependent AMP-binding enzyme family. Heterodimer of an alpha and a beta subunit. Pantetheine 4'-phosphate is required as a cofactor.

The enzyme catalyses (S)-2-amino-6-oxohexanoate + NADP(+) + H2O = L-2-aminoadipate + NADPH + 2 H(+). It catalyses the reaction (S)-2-amino-6-oxohexanoate + NAD(+) + H2O = L-2-aminoadipate + NADH + 2 H(+). It carries out the reaction (S)-2-amino-6-oxohexanoate + AMP + diphosphate + NADP(+) = L-2-aminoadipate + ATP + NADPH + H(+). It participates in amino-acid biosynthesis; L-lysine biosynthesis via AAA pathway; L-lysine from L-alpha-aminoadipate (fungal route): step 1/3. In terms of biological role, catalyzes the activation of alpha-aminoadipate by ATP-dependent adenylation and the reduction of activated alpha-aminoadipate by NADPH. The activated alpha-aminoadipate is bound to the phosphopantheinyl group of the enzyme itself before it is reduced to (S)-2-amino-6-oxohexanoate. This chain is L-2-aminoadipate reductase large subunit (LYS2), found in Eremothecium gossypii (strain ATCC 10895 / CBS 109.51 / FGSC 9923 / NRRL Y-1056) (Yeast).